The primary structure comprises 127 residues: Unclassified hydrophobin 5 (127 aa).

Residues 1-24 (MFNKQTNAIVLLFTFALFATLAVA) form the signal peptide. 4 disulfide bridges follow: C39/C107, C46/C101, C47/C92, and C108/C121.

Belongs to the fungal hydrophobin family. In terms of assembly, self-assembles to form functional amyloid fibrils called rodlets. Self-assembly into fibrillar rodlets occurs spontaneously at hydrophobic:hydrophilic interfaces and the rodlets further associate laterally to form amphipathic monolayers.

The protein localises to the secreted. Its subcellular location is the cell wall. Its function is as follows. Aerial growth, conidiation, and dispersal of filamentous fungi in the environment rely upon a capability of their secreting small amphipathic proteins called hydrophobins (HPBs) with low sequence identity. Class I can self-assemble into an outermost layer of rodlet bundles on aerial cell surfaces, conferring cellular hydrophobicity that supports fungal growth, development and dispersal; whereas Class II form highly ordered films at water-air interfaces through intermolecular interactions but contribute nothing to the rodlet structure. The polypeptide is Unclassified hydrophobin 5 (Pleurotus ostreatus (strain PC15) (Oyster mushroom)).